The following is a 614-amino-acid chain: Dihydroxy-acid dehydratase (614 aa).

D81 lines the Mg(2+) pocket. C122 contributes to the [2Fe-2S] cluster binding site. The Mg(2+) site is built by D123 and K124. K124 is subject to N6-carboxylysine. C195 is a [2Fe-2S] cluster binding site. E491 contributes to the Mg(2+) binding site. The active-site Proton acceptor is the S517.

This sequence belongs to the IlvD/Edd family. In terms of assembly, homodimer. [2Fe-2S] cluster serves as cofactor. The cofactor is Mg(2+).

The enzyme catalyses (2R)-2,3-dihydroxy-3-methylbutanoate = 3-methyl-2-oxobutanoate + H2O. It catalyses the reaction (2R,3R)-2,3-dihydroxy-3-methylpentanoate = (S)-3-methyl-2-oxopentanoate + H2O. It functions in the pathway amino-acid biosynthesis; L-isoleucine biosynthesis; L-isoleucine from 2-oxobutanoate: step 3/4. The protein operates within amino-acid biosynthesis; L-valine biosynthesis; L-valine from pyruvate: step 3/4. Its function is as follows. Functions in the biosynthesis of branched-chain amino acids. Catalyzes the dehydration of (2R,3R)-2,3-dihydroxy-3-methylpentanoate (2,3-dihydroxy-3-methylvalerate) into 2-oxo-3-methylpentanoate (2-oxo-3-methylvalerate) and of (2R)-2,3-dihydroxy-3-methylbutanoate (2,3-dihydroxyisovalerate) into 2-oxo-3-methylbutanoate (2-oxoisovalerate), the penultimate precursor to L-isoleucine and L-valine, respectively. The chain is Dihydroxy-acid dehydratase from Nitrobacter winogradskyi (strain ATCC 25391 / DSM 10237 / CIP 104748 / NCIMB 11846 / Nb-255).